Here is an 89-residue protein sequence, read N- to C-terminus: MTEVLFKYHGNLTGRAHFPTLATEADTTSDKYSNLYMYVGLFLSLLAILLILLFTMLLRLKHVISPITESTESVPQFTDVEMQSRIPTP.

N11 is a glycosylation site (N-linked (GlcNAc...) asparagine). A helical transmembrane segment spans residues 38-58 (YVGLFLSLLAILLILLFTMLL).

It localises to the membrane. In Mus musculus (Mouse), this protein is Serine-rich and transmembrane domain-containing 2.